Here is a 457-residue protein sequence, read N- to C-terminus: Cysteine--tRNA ligase (457 aa).

Residue C27 participates in Zn(2+) binding. Residues 29 to 39 (ITPQSEPHIGH) carry the 'HIGH' region motif. Zn(2+) contacts are provided by C207, H232, and E236. The 'KMSKS' region signature appears at 265–269 (KMSKS). K268 serves as a coordination point for ATP.

This sequence belongs to the class-I aminoacyl-tRNA synthetase family. In terms of assembly, monomer. Zn(2+) is required as a cofactor.

It localises to the cytoplasm. The enzyme catalyses tRNA(Cys) + L-cysteine + ATP = L-cysteinyl-tRNA(Cys) + AMP + diphosphate. This is Cysteine--tRNA ligase from Dehalococcoides mccartyi (strain ATCC BAA-2100 / JCM 16839 / KCTC 5957 / BAV1).